Reading from the N-terminus, the 179-residue chain is Large ribosomal subunit protein uL6 (179 aa).

Belongs to the universal ribosomal protein uL6 family. Part of the 50S ribosomal subunit.

Its function is as follows. This protein binds to the 23S rRNA, and is important in its secondary structure. It is located near the subunit interface in the base of the L7/L12 stalk, and near the tRNA binding site of the peptidyltransferase center. The polypeptide is Large ribosomal subunit protein uL6 (Spiroplasma citri).